A 236-amino-acid polypeptide reads, in one-letter code: Small ribosomal subunit protein uS3 (236 aa).

The KH type-2 domain occupies 39 to 107 (IRSYVMEELK…ETSLNIVEIR (69 aa)). The segment at 214 to 236 (ASEHRATRNDNSSSSLNRRRESV) is disordered.

It belongs to the universal ribosomal protein uS3 family. Part of the 30S ribosomal subunit. Forms a tight complex with proteins S10 and S14.

Functionally, binds the lower part of the 30S subunit head. Binds mRNA in the 70S ribosome, positioning it for translation. The protein is Small ribosomal subunit protein uS3 of Bartonella bacilliformis (strain ATCC 35685 / KC583 / Herrer 020/F12,63).